A 468-amino-acid chain; its full sequence is Methionine aminopeptidase 2 (468 aa).

The segment covering 1–10 (MGSKTFEGEG) has biased composition (basic and acidic residues). Residues 1-106 (MGSKTFEGEG…PPRVPLDDLF (106 aa)) are disordered. Polar residues predominate over residues 16–25 (DPSNSTSPNS). The span at 31 to 40 (RGAHLSRDGD) shows a compositional bias: basic and acidic residues. Acidic residues predominate over residues 46 to 56 (GDGDDGADGDE). Positions 61-75 (VTTTPLTEQQPSSET) are enriched in polar residues. The segment covering 78-90 (KKKKRRKPKKKIS) has biased composition (basic residues). H219 provides a ligand contact to substrate. A divalent metal cation contacts are provided by D240, D251, and H320. Residue H328 coordinates substrate. Residues E353 and E449 each contribute to the a divalent metal cation site.

The protein belongs to the peptidase M24A family. Methionine aminopeptidase eukaryotic type 2 subfamily. Co(2+) serves as cofactor. The cofactor is Zn(2+). Mn(2+) is required as a cofactor. It depends on Fe(2+) as a cofactor.

The protein localises to the cytoplasm. It catalyses the reaction Release of N-terminal amino acids, preferentially methionine, from peptides and arylamides.. Its function is as follows. Cotranslationally removes the N-terminal methionine from nascent proteins. The N-terminal methionine is often cleaved when the second residue in the primary sequence is small and uncharged (Met-Ala-, Cys, Gly, Pro, Ser, Thr, or Val). In Aspergillus oryzae (strain ATCC 42149 / RIB 40) (Yellow koji mold), this protein is Methionine aminopeptidase 2.